We begin with the raw amino-acid sequence, 120 residues long: MARIAGVDLPKNKRIEYALPYVYGIGLTTSRKILDAVGISYDKRVYELTEDEVAAINKHIRENYMVEGDLRRKVAMDIKALMDIGCYRGLRHRRGLPVRGQRTKTNARTRKGKKKTVGAK.

The interval 97-120 (PVRGQRTKTNARTRKGKKKTVGAK) is disordered.

This sequence belongs to the universal ribosomal protein uS13 family. In terms of assembly, part of the 30S ribosomal subunit. Forms a loose heterodimer with protein S19. Forms two bridges to the 50S subunit in the 70S ribosome.

Its function is as follows. Located at the top of the head of the 30S subunit, it contacts several helices of the 16S rRNA. In the 70S ribosome it contacts the 23S rRNA (bridge B1a) and protein L5 of the 50S subunit (bridge B1b), connecting the 2 subunits; these bridges are implicated in subunit movement. Contacts the tRNAs in the A and P-sites. In Nitratiruptor sp. (strain SB155-2), this protein is Small ribosomal subunit protein uS13.